We begin with the raw amino-acid sequence, 343 residues long: Arginine-hydroxylase NDUFAF5, mitochondrial (343 aa).

The transit peptide at 1-29 (MLRKVVLLRLCPLLGRPAVSASSGSRREV) directs the protein to the mitochondrion.

This sequence belongs to the methyltransferase superfamily. In terms of assembly, interacts with NDUFAF8, leading to stabilize NDUFAF5. Interacts with NDUFS7. Interacts with PYURF (via TRM112 domain); the interaction is direct and stabilizes NDUFAF5 protein.

The protein localises to the mitochondrion inner membrane. Arginine hydroxylase that mediates hydroxylation of 'Arg-122' of NDUFS7 and is involved in the assembly of mitochondrial NADH:ubiquinone oxidoreductase complex (complex I, MT-ND1) at early stages. May also have methyltransferase activity. The chain is Arginine-hydroxylase NDUFAF5, mitochondrial from Mus musculus (Mouse).